The primary structure comprises 267 residues: Dihydropteroate synthase (267 aa).

A Pterin-binding domain is found at Met1–Lys251. Asn11 lines the Mg(2+) pocket. Residues Thr51, Asp84, Asn103, Asp167, Lys203, and Arg239–His241 each bind (7,8-dihydropterin-6-yl)methyl diphosphate.

It belongs to the DHPS family. In terms of assembly, homodimer. Mg(2+) serves as cofactor.

The catalysed reaction is (7,8-dihydropterin-6-yl)methyl diphosphate + 4-aminobenzoate = 7,8-dihydropteroate + diphosphate. Its pathway is cofactor biosynthesis; tetrahydrofolate biosynthesis; 7,8-dihydrofolate from 2-amino-4-hydroxy-6-hydroxymethyl-7,8-dihydropteridine diphosphate and 4-aminobenzoate: step 1/2. Catalyzes the condensation of para-aminobenzoate (pABA) with 6-hydroxymethyl-7,8-dihydropterin diphosphate (DHPt-PP) to form 7,8-dihydropteroate (H2Pte), the immediate precursor of folate derivatives. This chain is Dihydropteroate synthase (folP), found in Staphylococcus aureus (strain Mu50 / ATCC 700699).